The primary structure comprises 155 residues: Protein SREK1IP1 (155 aa).

The CCHC-type zinc finger occupies 13–30 (AGCKKCGYPGHLTFECRN). Positions 43–155 (DVSSTSTEDS…SSSSQSSSSD (113 aa)) are disordered. A compositionally biased stretch (basic and acidic residues) spans 58–74 (EVARAPADKKNVTDTGK). The span at 75–93 (KKLKRKKEKKLKKHRKRLH) shows a compositional bias: basic residues. A compositionally biased stretch (basic and acidic residues) spans 94 to 103 (SSSESDDNSK). A compositionally biased stretch (basic residues) spans 104 to 137 (AKKRKSQKKEKRVKHKAKKGKQHKKDKRKEKRER). The segment covering 140–155 (SSSSSSSSSSQSSSSD) has biased composition (low complexity).

Its function is as follows. Possible splicing regulator involved in the control of cellular survival. The chain is Protein SREK1IP1 (srek1ip1) from Xenopus tropicalis (Western clawed frog).